We begin with the raw amino-acid sequence, 262 residues long: Shikimate dehydrogenase (NADP(+)) (262 aa).

Shikimate is bound by residues 15–17 (SRS) and Thr62. Residue Lys66 is the Proton acceptor of the active site. Glu78 lines the NADP(+) pocket. Positions 87 and 102 each coordinate shikimate. NADP(+) is bound by residues 126–130 (GAGGA), 150–155 (NRTLAR), and Met214. Tyr216 is a shikimate binding site. Gly236 contributes to the NADP(+) binding site.

The protein belongs to the shikimate dehydrogenase family. As to quaternary structure, homodimer.

The enzyme catalyses shikimate + NADP(+) = 3-dehydroshikimate + NADPH + H(+). Its pathway is metabolic intermediate biosynthesis; chorismate biosynthesis; chorismate from D-erythrose 4-phosphate and phosphoenolpyruvate: step 4/7. In terms of biological role, involved in the biosynthesis of the chorismate, which leads to the biosynthesis of aromatic amino acids. Catalyzes the reversible NADPH linked reduction of 3-dehydroshikimate (DHSA) to yield shikimate (SA). The polypeptide is Shikimate dehydrogenase (NADP(+)) (Acinetobacter baumannii (strain AB0057)).